The primary structure comprises 165 residues: C-phycoerythrin class 2 subunit alpha (165 aa).

Positions 75, 83, and 140 each coordinate phycourobilin.

The protein belongs to the phycobiliprotein family. In terms of assembly, heterodimer of an alpha and a beta chain. Contains three covalently linked phycourobilin chromophores.

It is found in the cellular thylakoid membrane. Functionally, light-harvesting photosynthetic bile pigment-protein from the phycobiliprotein complex. In Synechococcus sp. (strain WH8103), this protein is C-phycoerythrin class 2 subunit alpha (mpeA).